The sequence spans 188 residues: Der GTPase-activating protein YihI (188 aa).

Disordered regions lie at residues 1–80 (MKQP…VPVP) and 162–188 (DEDD…KDTF). Residues 27-37 (TRDELDAEARD) show a composition bias toward basic and acidic residues. Polar residues predominate over residues 47–57 (NRSGARTNVEG).

It belongs to the YihI family. As to quaternary structure, interacts with Der.

Functionally, a GTPase-activating protein (GAP) that modifies Der/EngA GTPase function. May play a role in ribosome biogenesis. This chain is Der GTPase-activating protein YihI, found in Yersinia pseudotuberculosis serotype O:1b (strain IP 31758).